The primary structure comprises 1574 residues: Centrosomal protein of 170 kDa protein B (1574 aa).

Residues 23–73 (IFVGRDECELMLQSRSVDKQHAVINYDQDRDEHWVKDLGSLNGTFVNDVRI) enclose the FHA domain. 3 disordered regions span residues 121–258 (VSVK…GVGG), 316–395 (DWLV…RDPQ), and 409–578 (FDGD…QDQE). Basic and acidic residues-rich tracts occupy residues 147-157 (RPEKGDRRHGA), 182-197 (SEDR…RPKD), and 325-344 (LLRR…DLPV). Residue Ser-360 is modified to Phosphoserine. Residues 370 to 382 (ASVSGASAEASGE) are compositionally biased toward low complexity. Ser-421 is modified (phosphoserine). A compositionally biased stretch (basic and acidic residues) spans 430–446 (PKADKRRGPGTSDRDRP). Positions 452 to 463 (ATGSSSGPQRAS) are enriched in polar residues. Positions 465-474 (LKREKTEERL) are enriched in basic and acidic residues. Positions 475 to 488 (GNTSPVPRASTRSF) are enriched in polar residues. 2 positions are modified to phosphoserine: Ser-478 and Ser-490. Over residues 518–528 (EKTPPVLPAPL) the composition is skewed to pro residues. Phosphoserine is present on Ser-534. Thr-540 and Thr-541 each carry phosphothreonine. 10 positions are modified to phosphoserine: Ser-595, Ser-617, Ser-653, Ser-709, Ser-744, Ser-746, Ser-749, Ser-751, Ser-819, and Ser-843. 6 disordered regions span residues 637–826 (PGMA…RDGL), 839–882 (RSGR…HISS), 924–1300 (SKSA…DPYG), 1333–1358 (AGDG…NTPA), 1377–1407 (NFQK…TNKT), and 1510–1535 (NRAP…TSPA). The segment covering 857–867 (FARQESFTKEP) has biased composition (polar residues). Ser-947 carries the post-translational modification Phosphoserine. Over residues 950-959 (DTASTISLLS) the composition is skewed to polar residues. Phosphoserine occurs at positions 965 and 981. Residues 996 to 1005 (ARERMSERQH) show a composition bias toward basic and acidic residues. Positions 1084–1102 (RSSATAQKVQQALTRSNSL) are enriched in polar residues. Ser-1122 bears the Phosphoserine mark. Residues 1134–1146 (AANPEPANRAAPE) show a composition bias toward low complexity. A phosphoserine mark is found at Ser-1166 and Ser-1186. The span at 1199–1213 (AEARAAAKKAAATAA) shows a compositional bias: low complexity. The segment covering 1265-1282 (HASTATQTPRGSSSTRAR) has biased composition (polar residues). Residue Thr-1289 is modified to Phosphothreonine. Position 1341 is a phosphoserine (Ser-1341). Composition is skewed to polar residues over residues 1344 to 1358 (PTRS…NTPA) and 1385 to 1396 (SMNSHNLDQNMN). Thr-1345 is subject to Phosphothreonine. Residue Ser-1347 is modified to Phosphoserine. Residues Ser-1530 and Ser-1533 each carry the phosphoserine modification.

It belongs to the CEP170 family.

It localises to the cytoplasm. It is found in the cytoskeleton. Plays a role in microtubule organization. This is Centrosomal protein of 170 kDa protein B (Cep170b) from Mus musculus (Mouse).